The sequence spans 121 residues: Small ribosomal subunit protein uS13 (121 aa).

The interval 92-121 (RKGLPMRGQRTRTNARTRKGPRRAAQALKK) is disordered.

This sequence belongs to the universal ribosomal protein uS13 family. In terms of assembly, part of the 30S ribosomal subunit. Forms a loose heterodimer with protein S19. Forms two bridges to the 50S subunit in the 70S ribosome.

In terms of biological role, located at the top of the head of the 30S subunit, it contacts several helices of the 16S rRNA. In the 70S ribosome it contacts the 23S rRNA (bridge B1a) and protein L5 of the 50S subunit (bridge B1b), connecting the 2 subunits; these bridges are implicated in subunit movement. Contacts the tRNAs in the A and P-sites. The polypeptide is Small ribosomal subunit protein uS13 (Burkholderia cenocepacia (strain HI2424)).